A 71-amino-acid polypeptide reads, in one-letter code: Small ribosomal subunit protein bS21 (71 aa).

It belongs to the bacterial ribosomal protein bS21 family.

This is Small ribosomal subunit protein bS21 from Blochmanniella floridana.